The sequence spans 156 residues: Large ribosomal subunit protein uL15 (156 aa).

The tract at residues 1 to 56 is disordered; sequence MDLSNLKPAEGATQAGQRLGRGEGSGRGGHSSTRGTKGQSSRSGSGTRPIWFEGGQ.

This sequence belongs to the universal ribosomal protein uL15 family. In terms of assembly, part of the 50S ribosomal subunit.

Its function is as follows. Binds to the 23S rRNA. The sequence is that of Large ribosomal subunit protein uL15 from Salinibacter ruber (strain DSM 13855 / M31).